A 345-amino-acid chain; its full sequence is Class I histocompatibility antigen, F10 alpha chain (345 aa).

The first 22 residues, 1–22 (MGPCGALGLGLLLAAVCGAAAP), serve as a signal peptide directing secretion. An alpha-1 region spans residues 23–110 (ELHTLRYIQT…ILQRRYNQTG (88 aa)). At 23-301 (ELHTLRYIQT…WEPPQPNLVP (279 aa)) the chain is on the extracellular side. N59 and N107 each carry an N-linked (GlcNAc...) asparagine glycan. The tract at residues 111–201 (GSHTVQWMYG…EYGKAELGRR (91 aa)) is alpha-2. 2 disulfide bridges follow: C121–C183 and C221–C277. The interval 202-292 (ERPEVRVWGK…SLPQPGLYSW (91 aa)) is alpha-3. In terms of domain architecture, Ig-like C1-type spans 204 to 293 (PEVRVWGKEA…LPQPGLYSWE (90 aa)). Residues 293-301 (EPPQPNLVP) are connecting peptide. A helical transmembrane segment spans residues 302–324 (IVAGVAVAIVAIAIMVGVGFIIY). Residues 325–345 (RRHAGKKGKGYNIAPGSNPAI) lie on the Cytoplasmic side of the membrane.

The protein belongs to the MHC class I family. As to quaternary structure, heterodimer of an alpha chain and a beta chain (beta-2-microglobulin).

It localises to the membrane. Its function is as follows. Involved in the presentation of foreign antigens to the immune system. In Gallus gallus (Chicken), this protein is Class I histocompatibility antigen, F10 alpha chain.